We begin with the raw amino-acid sequence, 129 residues long: Small ribosomal subunit protein uS11 (129 aa).

It belongs to the universal ribosomal protein uS11 family. As to quaternary structure, part of the 30S ribosomal subunit. Interacts with proteins S7 and S18. Binds to IF-3.

In terms of biological role, located on the platform of the 30S subunit, it bridges several disparate RNA helices of the 16S rRNA. Forms part of the Shine-Dalgarno cleft in the 70S ribosome. This is Small ribosomal subunit protein uS11 from Methylobacterium nodulans (strain LMG 21967 / CNCM I-2342 / ORS 2060).